A 603-amino-acid polypeptide reads, in one-letter code: Pyruvate oxidase (603 aa).

The tract at residues 1–191 is core; sequence MVMKQTKQTN…WYASANSYQT (191 aa). The segment at 192–342 is FAD-binding; the sequence is PLLPEPDVQA…ILAQVSERES (151 aa). Residues 343–603 form a thiamine pyrophosphate binding region; it reads TPWWQANLAN…LQHQIGQGGF (261 aa). Mg(2+) contacts are provided by Asp447, Asn474, and Gln476.

The protein belongs to the TPP enzyme family. As to quaternary structure, homotetramer. FAD is required as a cofactor. It depends on Mg(2+) as a cofactor. Thiamine diphosphate serves as cofactor.

The catalysed reaction is pyruvate + phosphate + O2 + H(+) = acetyl phosphate + H2O2 + CO2. Its function is as follows. Important for the aerobic growth. Decarboxylates pyruvate in four steps. The energy released is partially stored in acetyl phosphate. In Lactiplantibacillus plantarum (strain ATCC BAA-793 / NCIMB 8826 / WCFS1) (Lactobacillus plantarum), this protein is Pyruvate oxidase (pox5).